The primary structure comprises 241 residues: ATP synthase subunit a (241 aa).

6 helical membrane passes run 19–39 (AVLIAHLLLVAVIVIMIAKMA), 80–100 (LVAAVGLFIFVSNVIGIIPGF), 106–126 (NINVTLPLALMVFVYYNYEGI), 135–155 (FAHFAGPVKLLAPLMFPIEIV), 177–197 (LFLWVLLMLVPFVAPLPAYLL), and 203–223 (LLQTFVFMILIYVYLAGAVAI).

Belongs to the ATPase A chain family. In terms of assembly, F-type ATPases have 2 components, CF(1) - the catalytic core - and CF(0) - the membrane proton channel. CF(1) has five subunits: alpha(3), beta(3), gamma(1), delta(1), epsilon(1). CF(0) has three main subunits: a(1), b(2) and c(9-12). The alpha and beta chains form an alternating ring which encloses part of the gamma chain. CF(1) is attached to CF(0) by a central stalk formed by the gamma and epsilon chains, while a peripheral stalk is formed by the delta and b chains.

It is found in the cell inner membrane. Its function is as follows. Key component of the proton channel; it plays a direct role in the translocation of protons across the membrane. This is ATP synthase subunit a from Sulfurovum sp. (strain NBC37-1).